A 372-amino-acid chain; its full sequence is UDP-N-acetylglucosamine--N-acetylmuramyl-(pentapeptide) pyrophosphoryl-undecaprenol N-acetylglucosamine transferase (372 aa).

Residues 14–16 (TGG), Asn128, Arg169, Ser201, Ile257, and Gln302 contribute to the UDP-N-acetyl-alpha-D-glucosamine site.

This sequence belongs to the glycosyltransferase 28 family. MurG subfamily.

It localises to the cell inner membrane. It carries out the reaction di-trans,octa-cis-undecaprenyl diphospho-N-acetyl-alpha-D-muramoyl-L-alanyl-D-glutamyl-meso-2,6-diaminopimeloyl-D-alanyl-D-alanine + UDP-N-acetyl-alpha-D-glucosamine = di-trans,octa-cis-undecaprenyl diphospho-[N-acetyl-alpha-D-glucosaminyl-(1-&gt;4)]-N-acetyl-alpha-D-muramoyl-L-alanyl-D-glutamyl-meso-2,6-diaminopimeloyl-D-alanyl-D-alanine + UDP + H(+). It functions in the pathway cell wall biogenesis; peptidoglycan biosynthesis. Cell wall formation. Catalyzes the transfer of a GlcNAc subunit on undecaprenyl-pyrophosphoryl-MurNAc-pentapeptide (lipid intermediate I) to form undecaprenyl-pyrophosphoryl-MurNAc-(pentapeptide)GlcNAc (lipid intermediate II). This Bacteroides thetaiotaomicron (strain ATCC 29148 / DSM 2079 / JCM 5827 / CCUG 10774 / NCTC 10582 / VPI-5482 / E50) protein is UDP-N-acetylglucosamine--N-acetylmuramyl-(pentapeptide) pyrophosphoryl-undecaprenol N-acetylglucosamine transferase.